The chain runs to 20 residues: Alkaline phosphatase (20 aa).

Expressed by the venom gland.

It is found in the secreted. The catalysed reaction is a phosphate monoester + H2O = an alcohol + phosphate. In terms of biological role, has hemorrhagic activity. The polypeptide is Alkaline phosphatase (Deinagkistrodon acutus (Hundred-pace snake)).